A 687-amino-acid chain; its full sequence is Variant-specific surface protein VSP4A1 (687 aa).

The signal sequence occupies residues 1 to 14 (MLLTAFYVVLGSFA). Topologically, residues 15-660 (APCQQDGDHI…SGLSTGAIAG (646 aa)) are extracellular. A helical transmembrane segment spans residues 661 to 681 (ISVAAIVVVGGLVGFLCWWFI). Topologically, residues 682-687 (CRGKAQ) are cytoplasmic.

This sequence belongs to the Giardia variant surface protein family. Post-translationally, O-glycosylated. The major glycan is a trisaccharide with Glc at the reducing terminus. Palmitoylated.

The protein resides in the cell membrane. This is Variant-specific surface protein VSP4A1 from Giardia intestinalis (Giardia lamblia).